Here is a 498-residue protein sequence, read N- to C-terminus: Resveratrol cleavage oxygenase 1 (498 aa).

Residues tyrosine 105 and lysine 136 each coordinate piceatannol. Trans-resveratrol is bound by residues tyrosine 105 and lysine 136. Histidine 169, histidine 220, and histidine 285 together coordinate Fe cation. Glutamate 355 provides a ligand contact to piceatannol. Position 355 (glutamate 355) interacts with trans-resveratrol. Histidine 481 contacts Fe cation.

Belongs to the carotenoid oxygenase family. Fe(2+) serves as cofactor.

The enzyme catalyses trans-resveratrol + O2 = 3,5-dihydroxybenzaldehyde + 4-hydroxybenzaldehyde. It catalyses the reaction piceatannol + O2 = 3,5-dihydroxybenzaldehyde + 3,4-dihydroxybenzaldehyde. Its function is as follows. Dioxygenase that cleaves the interphenyl C-alpha-C-beta double bond of resveratrol to yield 3,5-dihydroxybenzaldehyde and 4-hydroxybenzaldehyde. Also cleaves piceatannol, a compound that differs from resveratrol only in the occurrence of an additional hydroxyl group, which leads to the production of 3,4-dihydroxybenzaldehyde and 3,5-hydroxybenzaldehyde. The chain is Resveratrol cleavage oxygenase 1 from Aspergillus fumigatus (strain ATCC MYA-4609 / CBS 101355 / FGSC A1100 / Af293) (Neosartorya fumigata).